We begin with the raw amino-acid sequence, 383 residues long: Carbamoyl phosphate synthase small chain (383 aa).

The interval 1-190 (MPHPSSRQAH…FDQRLKQHPD (190 aa)) is CPSase. L-glutamine is bound by residues S51, G242, and G244. The Glutamine amidotransferase type-1 domain occupies 194–381 (RVVAIDFGIK…VALMADRRDV (188 aa)). C271 serves as the catalytic Nucleophile. Residues L272, Q275, N311, G313, and F314 each contribute to the L-glutamine site. Active-site residues include H354 and E356.

Belongs to the CarA family. Composed of two chains; the small (or glutamine) chain promotes the hydrolysis of glutamine to ammonia, which is used by the large (or ammonia) chain to synthesize carbamoyl phosphate. Tetramer of heterodimers (alpha,beta)4.

The enzyme catalyses hydrogencarbonate + L-glutamine + 2 ATP + H2O = carbamoyl phosphate + L-glutamate + 2 ADP + phosphate + 2 H(+). It carries out the reaction L-glutamine + H2O = L-glutamate + NH4(+). It participates in amino-acid biosynthesis; L-arginine biosynthesis; carbamoyl phosphate from bicarbonate: step 1/1. The protein operates within pyrimidine metabolism; UMP biosynthesis via de novo pathway; (S)-dihydroorotate from bicarbonate: step 1/3. Functionally, small subunit of the glutamine-dependent carbamoyl phosphate synthetase (CPSase). CPSase catalyzes the formation of carbamoyl phosphate from the ammonia moiety of glutamine, carbonate, and phosphate donated by ATP, constituting the first step of 2 biosynthetic pathways, one leading to arginine and/or urea and the other to pyrimidine nucleotides. The small subunit (glutamine amidotransferase) binds and cleaves glutamine to supply the large subunit with the substrate ammonia. This chain is Carbamoyl phosphate synthase small chain, found in Parasynechococcus marenigrum (strain WH8102).